The following is a 93-amino-acid chain: Sm-like protein LSM2 (93 aa).

Positions 2 to 76 (LFFSYFKDLV…VRYVQLPKDG (75 aa)) constitute a Sm domain.

This sequence belongs to the snRNP Sm proteins family. Component of the heptameric LSM1-LSM7 complex that forms a seven-membered ring structure with a donut shape. The LSM subunits are arranged in the order LSM1, LSM2, LSM3, LSM6, LSM5, LSM7 and LSM4. LSM2 subunit interacts only with its two neighboring subunits, LSM1A or LSM1B and LSM3A or LSM3B. Component of the heptameric LSM2-LSM8 complex that forms a seven-membered ring structure with a donut shape. The LSM subunits are arranged in the order LSM8, LSM2, LSM3, LSM6, LSM5, LSM7 and LSM4. LSM2 subunit interacts only with its two neighboring subunits, LSM8 and LSM3A or LSM3B. In terms of tissue distribution, expressed in roots, leaves, stems, flowers and siliques.

The protein localises to the cytoplasm. It localises to the nucleus. Functionally, component of LSM protein complexes, which are involved in RNA processing. Component of the cytoplasmic LSM1-LSM7 complex which is involved in mRNA degradation by promoting decapping and leading to accurate 5'-3' mRNA decay. The cytoplasmic LSM1-LSM7 complex regulates developmental gene expression by the decapping of specific development-related transcripts. Component of the nuclear LSM2-LSM8 complex which is involved splicing nuclear mRNAs. LSM2-LSM8 binds directly to the U6 small nuclear RNAs (snRNAs) and is essential for accurate splicing of selected development-related mRNAs through the stabilization of the spliceosomal U6 snRNA. Plays a critical role in the regulation of development-related gene expression. The sequence is that of Sm-like protein LSM2 from Arabidopsis thaliana (Mouse-ear cress).